The chain runs to 572 residues: Zyxin (572 aa).

Position 2 is an N-acetylalanine (A2). A disordered region spans residues 23-351 (QKKFGPVVAP…VRSPGAPGPL (329 aa)). Pro residues-rich tracts occupy residues 63–78 (IPPPPPEDFPLPPPPL) and 93–108 (FPPPPPPIEESFPPAP). Residues S116, S142, S143, S169, and S170 each carry the phosphoserine modification. Residues 143–156 (SIDLEIDSLSSLLD) show a composition bias toward low complexity. Residue T179 is modified to Phosphothreonine. Residues 202 to 239 (SPSSSQPLPQVPAPAQSQTQFHVQPQPQPKPQVQLHVQ) show a composition bias toward low complexity. The segment covering 240–252 (SQTQPVSLANTQP) has biased composition (polar residues). R253 bears the Asymmetric dimethylarginine mark. Over residues 253–265 (RGPPASSPAPAPK) the composition is skewed to pro residues. Phosphoserine is present on S259. N6-acetyllysine is present on K265. A Phosphoserine modification is found at S267. Phosphothreonine is present on T270. K272 bears the N6-acetyllysine mark. T274 carries the post-translational modification Phosphothreonine. Residue K279 is modified to N6-acetyllysine. Phosphoserine occurs at positions 281, 288, and 308. The span at 305 to 318 (GTGSPQPPSFTYAQ) shows a compositional bias: polar residues. Positions 319–330 (QREKPRVQEKQH) are enriched in basic and acidic residues. Position 344 is a phosphoserine (S344). LIM zinc-binding domains follow at residues 384–443 (CGRC…TLEK), 444–503 (CNTC…YAPR), and 504–570 (CSVC…TARA).

It belongs to the zyxin/ajuba family. In terms of assembly, interacts with HPV type 6 protein E6. Does not interact significantly with E6 proteins from HPV types 11, 16, or 18. Interacts, via the Pro-rich regions, with the EVH1 domains of ENAH, EVL and VASP. Interacts with the first LIM domain of TES. Interacts with NEBL (isoform 2). Interacts with SYNPO2. As to quaternary structure, (Microbial infection) Interacts with human papillomavirus type 6/HPV6 protein E6. Does not interact significantly with E6 proteins from HPV types 11, 16, or 18.

It is found in the cytoplasm. It localises to the cytoskeleton. Its subcellular location is the nucleus. The protein resides in the cell junction. The protein localises to the focal adhesion. Adhesion plaque protein. Binds alpha-actinin and the CRP protein. Important for targeting TES and ENA/VASP family members to focal adhesions and for the formation of actin-rich structures. May be a component of a signal transduction pathway that mediates adhesion-stimulated changes in gene expression. This Homo sapiens (Human) protein is Zyxin (ZYX).